The following is a 417-amino-acid chain: Voltage-gated potassium channel Kch (417 aa).

Residues 1–21 are Cytoplasmic-facing; it reads MSHWATFKQTATNLWVTLRHD. A helical membrane pass occupies residues 22 to 41; it reads ILALAVFLNGLLIFKTIYGM. Residues 42-63 lie on the Periplasmic side of the membrane; that stretch reads SVNLLDIFHIKAFSELDLSLLA. A helical membrane pass occupies residues 64-83; that stretch reads NAPLFMLGVFLVLNSIGLLF. Topologically, residues 84-86 are cytoplasmic; sequence RAK. The chain crosses the membrane as a helical span at residues 87–104; sequence LAWAISIILLLIALIYTL. Residues 105-110 lie on the Periplasmic side of the membrane; the sequence is HFYPWL. A helical transmembrane segment spans residues 111-127; it reads KFSIGFCIFTLVFLLIL. Residues 128–140 are Cytoplasmic-facing; it reads RKDFSHSSAAAGT. Residues 141 to 160 form a helical membrane-spanning segment; sequence IFAFISFTTLLFYSTYGALY. Topologically, residues 161 to 199 are periplasmic; it reads LSEGFNPRIESLMTAFYFSIETMSTVGYGDIVPVSESAR. The short motif at 185–190 is the Selectivity filter element; that stretch reads TVGYGD. The helical transmembrane segment at 200–220 threads the bilayer; it reads LFTISVIISGITVFATSMTSI. The Cytoplasmic portion of the chain corresponds to 221 to 417; the sequence is FGPLIRGGFN…KADSKESAQK (197 aa). The RCK N-terminal domain occupies 243–363; it reads KDHFIVCGHS…IKMVHPDIIL (121 aa).

The protein belongs to the potassium channel family. As to quaternary structure, dimer.

Its subcellular location is the cell inner membrane. Its function is as follows. K(+)-specific ion channel. May play a role in the defense against osmotic shock. The sequence is that of Voltage-gated potassium channel Kch (kch) from Escherichia coli (strain K12).